The primary structure comprises 255 residues: uncharacterized protein (255 aa).

Positions 1-23 (MKRLNTLVLYISFLILIISIVAG) are cleaved as a signal peptide. Cys24 is lipidated: N-palmitoyl cysteine. Cys24 carries the S-diacylglycerol cysteine lipid modification.

This sequence belongs to the staphylococcal tandem lipoprotein family.

The protein resides in the cell membrane. This is an uncharacterized protein from Staphylococcus aureus (strain N315).